Consider the following 535-residue polypeptide: Peptide chain release factor 3 (535 aa).

Residues 8–278 (ARRRTFAIIS…VDQAPAPGPR (271 aa)) form the tr-type G domain. GTP-binding positions include 17–24 (SHPDAGKT), 85–89 (DTPGH), and 139–142 (NKLD).

This sequence belongs to the TRAFAC class translation factor GTPase superfamily. Classic translation factor GTPase family. PrfC subfamily.

It is found in the cytoplasm. Increases the formation of ribosomal termination complexes and stimulates activities of RF-1 and RF-2. It binds guanine nucleotides and has strong preference for UGA stop codons. It may interact directly with the ribosome. The stimulation of RF-1 and RF-2 is significantly reduced by GTP and GDP, but not by GMP. The sequence is that of Peptide chain release factor 3 from Bordetella parapertussis (strain 12822 / ATCC BAA-587 / NCTC 13253).